Consider the following 164-residue polypeptide: Phosphatidyl-N-methylethanolamine N-methyltransferase (164 aa).

An intramembrane region (helical) is located at residues 1-21 (MGLLAAIGVLLPFPFYWWLWT). Residues 22–30 (NAQSWVNLC) lie on the Lumenal side of the membrane. Residues 31–52 (GRERDPSTVMARVSHVLKAAQL) form a helical membrane-spanning segment. At 53–69 (LSLFSVASLSWPPPLYF) the chain is on the cytoplasmic side. The chain crosses the membrane as a helical span at residues 70-90 (WPLMAFGQFLNFRVYQLLGEA). Position 74–76 (74–76 (AFG)) interacts with S-adenosyl-L-methionine. Over 91–131 (GTYYGVRFGKNIPWVTEFPFGVIRDPQYVGSIMSLLACLSW) the chain is Lumenal. The helical transmembrane segment at 132–151 (VPFQYILLWSLGYVFMMFLE) threads the bilayer. Residues 152-164 (SKEDPNARAKSIS) lie on the Cytoplasmic side of the membrane. Residue 154–155 (ED) participates in S-adenosyl-L-methionine binding.

The protein belongs to the class VI-like SAM-binding methyltransferase superfamily. PEMT/PEM2 methyltransferase family.

Its subcellular location is the endoplasmic reticulum membrane. It catalyses the reaction a 1,2-diacyl-sn-glycero-3-phospho-N-methylethanolamine + S-adenosyl-L-methionine = a 1,2-diacyl-sn-glycero-3-phospho-N,N-dimethylethanolamine + S-adenosyl-L-homocysteine + H(+). It carries out the reaction a 1,2-diacyl-sn-glycero-3-phospho-N,N-dimethylethanolamine + S-adenosyl-L-methionine = a 1,2-diacyl-sn-glycero-3-phosphocholine + S-adenosyl-L-homocysteine + H(+). Its pathway is phospholipid metabolism; phosphatidylcholine biosynthesis. Its function is as follows. Catalyzes the second two steps of the methylation pathway of phosphatidylcholine biosynthesis, the SAM-dependent methylation of phosphatidylmonomethylethanolamine (PMME) to phosphatidyldimethylethanolamine (PDME) and of PDME to phosphatidylcholine (PC). The sequence is that of Phosphatidyl-N-methylethanolamine N-methyltransferase (PLMT) from Arabidopsis thaliana (Mouse-ear cress).